A 266-amino-acid polypeptide reads, in one-letter code: PTS system mannose-specific EIIC component (266 aa).

At Met-1 the chain carries N-formylmethionine. The Periplasmic segment spans residues 1 to 4 (MEIT). Residues 1–237 (MEITTLQIVL…GVIGTVMAVL (237 aa)) enclose the PTS EIIC type-4 domain. An intramembrane segment occupies 5 to 43 (TLQIVLVFIVACIAGMGSILDEFQFHRPLIACTLVGIVL). Residues 44–46 (GDM) are Periplasmic-facing. Residues 47–86 (KTGIIIGGTLEMIALGWMNIGAAVAPDAALASIISTILVI) lie within the membrane without spanning it. The Periplasmic segment spans residues 87 to 90 (AGHQ). At 91–124 (SIGAGIALAIPLAAAGQVLTIIVRTITVAFQHAA) the chain is embedded in the membrane. Residues 125–132 (DKAADNGN) lie on the Cytoplasmic side of the membrane. A transmembrane helix spans residues 133–160 (LTAISWIHVSSLFLQAMRVAIPAVIVAL). Residues 161–176 (SVGTSEVQNMLNAIPE) are Periplasmic-facing. The chain crosses the lipid bilayer at residues 177–200 (VVTNGLNIAGGMIVVVGYAMVINM). At 201-207 (MRAGYLM) the chain is on the cytoplasmic side. Residues 208 to 218 (PFFYLGFVTAA) are membrane-embedded. The Periplasmic portion of the chain corresponds to 219–224 (FTNFNL). The chain crosses the lipid bilayer at residues 225–242 (VALGVIGTVMAVLYIQLS). Residues 243–266 (PKYNRVAGAPAQAAGNNDLDNELD) lie on the Cytoplasmic side of the membrane.

As to quaternary structure, homotrimer of protomers that are composed of two subunits, IIC and IID.

It localises to the cell inner membrane. The phosphoenolpyruvate-dependent sugar phosphotransferase system (sugar PTS), a major carbohydrate active transport system, catalyzes the phosphorylation of incoming sugar substrates concomitantly with their translocation across the cell membrane. The enzyme II ManXYZ PTS system is involved in mannose transport. The polypeptide is PTS system mannose-specific EIIC component (manY) (Escherichia coli O157:H7).